The sequence spans 376 residues: Beta-centractin (376 aa).

M1 bears the N-acetylmethionine mark. Y4 carries the 3'-nitrotyrosine modification.

The protein belongs to the actin family. ARP1 subfamily.

Its subcellular location is the cytoplasm. The protein resides in the cytoskeleton. It localises to the microtubule organizing center. It is found in the centrosome. Its function is as follows. Component of a multi-subunit complex involved in microtubule based vesicle motility. It is associated with the centrosome. This chain is Beta-centractin (ACTR1B), found in Homo sapiens (Human).